The chain runs to 403 residues: Phosphopentomutase (403 aa).

Mn(2+) is bound by residues Asp-13, Asp-298, His-303, Asp-339, His-340, and His-351.

It belongs to the phosphopentomutase family. Mn(2+) serves as cofactor.

Its subcellular location is the cytoplasm. It carries out the reaction 2-deoxy-alpha-D-ribose 1-phosphate = 2-deoxy-D-ribose 5-phosphate. The enzyme catalyses alpha-D-ribose 1-phosphate = D-ribose 5-phosphate. It functions in the pathway carbohydrate degradation; 2-deoxy-D-ribose 1-phosphate degradation; D-glyceraldehyde 3-phosphate and acetaldehyde from 2-deoxy-alpha-D-ribose 1-phosphate: step 1/2. Its function is as follows. Isomerase that catalyzes the conversion of deoxy-ribose 1-phosphate (dRib-1-P) and ribose 1-phosphate (Rib-1-P) to deoxy-ribose 5-phosphate (dRib-5-P) and ribose 5-phosphate (Rib-5-P), respectively. In Streptococcus thermophilus, this protein is Phosphopentomutase.